The primary structure comprises 511 residues: Aldehyde dehydrogenase X, mitochondrial (511 aa).

The N-terminal 11 residues, 1–11 (PRLFALHHSAT), are a transit peptide targeting the mitochondrion. Lys45 is subject to N6-acetyllysine. Lys46 carries the post-translational modification N6-acetyllysine; alternate. Lys46 bears the N6-succinyllysine; alternate mark. N6-succinyllysine is present on Lys75. 256 to 261 (GSTKVG) lines the NAD(+) pocket. Residue Glu279 is the Proton acceptor of the active site. Cys313 functions as the Nucleophile in the catalytic mechanism. N6-acetyllysine; alternate occurs at positions 377, 393, and 420. 3 positions are modified to N6-succinyllysine; alternate: Lys377, Lys393, and Lys420. Lys423 is modified (N6-acetyllysine).

This sequence belongs to the aldehyde dehydrogenase family. Homotetramer.

The protein localises to the mitochondrion matrix. It carries out the reaction an aldehyde + NAD(+) + H2O = a carboxylate + NADH + 2 H(+). The protein operates within alcohol metabolism; ethanol degradation; acetate from ethanol: step 2/2. Functionally, ALDHs play a major role in the detoxification of alcohol-derived acetaldehyde. They are involved in the metabolism of corticosteroids, biogenic amines, neurotransmitters, and lipid peroxidation. In the cornea, this enzyme may help in the absorption of the damaging UV-B, as well as in the detoxification of the UV-induced peroxidic aldehydes. The sequence is that of Aldehyde dehydrogenase X, mitochondrial (ALDH1B1) from Bos taurus (Bovine).